A 325-amino-acid chain; its full sequence is Small ribosomal subunit protein RACK1 (325 aa).

7 WD repeats span residues 5 to 48 (QMKL…WDVD), 58 to 99 (IGRP…WDLN), 100 to 141 (QGVS…WNTL), 143 to 186 (QCKY…WNLG), 187 to 227 (NCRL…LWDL), 228 to 268 (NEGK…WDLE), and 269 to 320 (DKKE…YQVS).

This sequence belongs to the WD repeat G protein beta family. Ribosomal protein RACK1 subfamily.

Its function is as follows. Required for the expression of antimicrobial peptide nlp-29 in response to fungal infection or physical injury. In Caenorhabditis elegans, this protein is Small ribosomal subunit protein RACK1 (rack-1).